The primary structure comprises 206 residues: Fibroblast growth factor 4 (206 aa).

The N-terminal stretch at 1–30 (MSGPGTAAVALLPAVLLALLAPWAGRGGAA) is a signal peptide.

The protein belongs to the heparin-binding growth factors family. As to quaternary structure, interacts with FGFR1, FGFR2, FGFR3 and FGFR4. Affinity between fibroblast growth factors (FGFs) and their receptors is increased by heparan sulfate glycosaminoglycans that function as coreceptors.

The protein resides in the secreted. Its function is as follows. Plays an important role in the regulation of embryonic development, cell proliferation, and cell differentiation. Required for normal limb and cardiac valve development during embryogenesis. May play a role in embryonic molar tooth bud development via inducing the expression of MSX1, MSX2 and MSX1-mediated expression of SDC1 in dental mesenchyme cells. The sequence is that of Fibroblast growth factor 4 from Homo sapiens (Human).